Consider the following 400-residue polypeptide: EARP-interacting protein homolog (400 aa).

The tract at residues Asn-95 to Asn-114 is disordered. A compositionally biased stretch (low complexity) spans Asn-96 to Asn-114. WD repeat units follow at residues Gly-138–Thr-178, Ala-227–Lys-267, and Gly-271–Asn-311. Low complexity predominate over residues Asn-314–Pro-333. A disordered region spans residues Asn-314–Asn-348. A WD 4 repeat occupies Glu-358–Leu-397.

Belongs to the WD repeat EIPR1 family.

The sequence is that of EARP-interacting protein homolog from Dictyostelium discoideum (Social amoeba).